The following is a 140-amino-acid chain: Protein YwqH (140 aa).

Residues 6-51 are a coiled coil; the sequence is MLADIKSSLNGKISDVEDKIEKLKKAKKDIDTLQEEAITEIKEIVK.

This Bacillus subtilis (strain 168) protein is Protein YwqH (ywqH).